The primary structure comprises 310 residues: HPr kinase/phosphorylase (310 aa).

Active-site residues include histidine 138 and lysine 159. Residue 153-160 coordinates ATP; sequence GDSGIGKS. Mg(2+) is bound at residue serine 160. Aspartate 177 (proton acceptor; for phosphorylation activity. Proton donor; for dephosphorylation activity) is an active-site residue. The segment at 201–210 is important for the catalytic mechanism of both phosphorylation and dephosphorylation; the sequence is LEIRGVGIID. Glutamate 202 serves as a coordination point for Mg(2+). Arginine 243 is a catalytic residue. Residues 264–269 form an important for the catalytic mechanism of dephosphorylation region; it reads PVKTGR.

It belongs to the HPrK/P family. In terms of assembly, homohexamer. Mg(2+) is required as a cofactor.

It carries out the reaction [HPr protein]-L-serine + ATP = [HPr protein]-O-phospho-L-serine + ADP + H(+). It catalyses the reaction [HPr protein]-O-phospho-L-serine + phosphate + H(+) = [HPr protein]-L-serine + diphosphate. Catalyzes the ATP- as well as the pyrophosphate-dependent phosphorylation of a specific serine residue in HPr, a phosphocarrier protein of the phosphoenolpyruvate-dependent sugar phosphotransferase system (PTS). HprK/P also catalyzes the pyrophosphate-producing, inorganic phosphate-dependent dephosphorylation (phosphorolysis) of seryl-phosphorylated HPr (P-Ser-HPr). The two antagonistic activities of HprK/P are regulated by several intracellular metabolites, which change their concentration in response to the absence or presence of rapidly metabolisable carbon sources (glucose, fructose, etc.) in the growth medium. Therefore, by controlling the phosphorylation state of HPr, HPrK/P is a sensor enzyme that plays a major role in the regulation of carbon metabolism and sugar transport: it mediates carbon catabolite repression (CCR), and regulates PTS-catalyzed carbohydrate uptake and inducer exclusion. This chain is HPr kinase/phosphorylase, found in Streptococcus equi subsp. equi (strain 4047).